The sequence spans 92 residues: Trp operon repressor homolog (92 aa).

The DNA-binding element occupies 56–79; that stretch reads QREVASKLGVSITKITRGAANLQD.

This sequence belongs to the TrpR family. As to quaternary structure, homodimer.

It localises to the cytoplasm. Its function is as follows. This protein is an aporepressor. When complexed with L-tryptophan it binds the operator region of the trp operon and prevents the initiation of transcription. This Xylella fastidiosa (strain M23) protein is Trp operon repressor homolog.